Here is a 290-residue protein sequence, read N- to C-terminus: 4-hydroxy-tetrahydrodipicolinate synthase (290 aa).

T44 is a pyruvate binding site. Catalysis depends on Y131, which acts as the Proton donor/acceptor. K159 serves as the catalytic Schiff-base intermediate with substrate. Pyruvate is bound at residue I201.

The protein belongs to the DapA family. In terms of assembly, homotetramer; dimer of dimers.

The protein resides in the cytoplasm. It carries out the reaction L-aspartate 4-semialdehyde + pyruvate = (2S,4S)-4-hydroxy-2,3,4,5-tetrahydrodipicolinate + H2O + H(+). Its pathway is amino-acid biosynthesis; L-lysine biosynthesis via DAP pathway; (S)-tetrahydrodipicolinate from L-aspartate: step 3/4. Its function is as follows. Catalyzes the condensation of (S)-aspartate-beta-semialdehyde [(S)-ASA] and pyruvate to 4-hydroxy-tetrahydrodipicolinate (HTPA). In Jannaschia sp. (strain CCS1), this protein is 4-hydroxy-tetrahydrodipicolinate synthase.